The primary structure comprises 541 residues: Metal transporter Nramp1 (541 aa).

Asn-17 carries N-linked (GlcNAc...) asparagine glycosylation. Transmembrane regions (helical) follow at residues 45 to 65, 78 to 98, 122 to 142, 153 to 173, 182 to 202, 222 to 242, 271 to 291, 315 to 335, 371 to 391, and 392 to 412; these read LFAY…PGNF, ELLW…SLAA, FILW…EVIG, IPVW…LALQ, LFIA…LGYA, GAAG…NLFL, GFAL…SGAV, FLLE…ALLA, SLAI…GAGK, and LIII…VPLL. The N-linked (GlcNAc...) asparagine glycan is linked to Asn-426. The next 2 membrane-spanning stretches (helical) occupy residues 430 to 450 and 465 to 485; these read ISSI…YYLA and VAAI…LAGV. The N-linked (GlcNAc...) asparagine glycan is linked to Asn-511.

Belongs to the NRAMP (TC 2.A.55) family.

Its subcellular location is the membrane. In terms of biological role, probable divalent metal transporter. The polypeptide is Metal transporter Nramp1 (Populus trichocarpa (Western balsam poplar)).